Consider the following 171-residue polypeptide: UPF0312 protein SAB2563 (171 aa).

Belongs to the UPF0312 family.

In Staphylococcus aureus (strain bovine RF122 / ET3-1), this protein is UPF0312 protein SAB2563.